The sequence spans 190 residues: uncharacterized protein (190 aa).

Belongs to the Iojap/RsfS family.

This is an uncharacterized protein from Caenorhabditis elegans.